The following is a 367-amino-acid chain: Dye-decolorizing peroxidase (367 aa).

D152 (proton acceptor) is an active-site residue. H225 serves as a coordination point for heme. The disordered stretch occupies residues 311 to 367 (DPDGELAAAEPSDAQNDDPASASARIEETDPPNPASADDPAPADDSLGIGSLRRRDQ). Low complexity predominate over residues 345–356 (ASADDPAPADDS). Positions 358-365 (GIGSLRRR) are targeting peptide.

It belongs to the DyP-type peroxidase family. As to quaternary structure, homohexamer. Heme b serves as cofactor.

The protein localises to the encapsulin nanocompartment. Cargo protein of a type 1 encapsulin nanocompartment. Has both general peroxidase activity and dye-decolorizing activity. Can catalyze the oxidation of both protoporphyrinogen IX and coproporphyrinogen III to their corresponding porphyrins. Also efficiently decolorizes the dyes alizarin red and Cibacron blue F3GA. This cargo-loaded encapsulin nanocompartment is probably involved in protection against oxidative damage. The polypeptide is Dye-decolorizing peroxidase (Brevibacterium linens).